Here is a 140-residue protein sequence, read N- to C-terminus: Large ribosomal subunit protein mL43 (140 aa).

This sequence belongs to the mitochondrion-specific ribosomal protein mL43 family. In terms of assembly, component of the mitochondrial large ribosomal subunit (mt-LSU). Mature yeast 74S mitochondrial ribosomes consist of a small (37S) and a large (54S) subunit. The 37S small subunit contains a 15S ribosomal RNA (15S mt-rRNA) and 34 different proteins. The 54S large subunit contains a 21S rRNA (21S mt-rRNA) and 46 different proteins.

It localises to the mitochondrion. In terms of biological role, component of the mitochondrial ribosome (mitoribosome), a dedicated translation machinery responsible for the synthesis of mitochondrial genome-encoded proteins, including at least some of the essential transmembrane subunits of the mitochondrial respiratory chain. The mitoribosomes are attached to the mitochondrial inner membrane and translation products are cotranslationally integrated into the membrane. Also has an extraribosomal function, being essential for mitochondrial genome integrity. May interact with MHR1 to take part in the mtDNA repair mechanism. The polypeptide is Large ribosomal subunit protein mL43 (MRPL51) (Saccharomyces cerevisiae (strain ATCC 204508 / S288c) (Baker's yeast)).